Consider the following 217-residue polypeptide: Ras-like protein (217 aa).

17–24 (GGGGVGKS) serves as a coordination point for GTP. Positions 39-47 (YDPTIEDSY) match the Effector region motif. Residues 64–68 (DTAGQ) and 123–126 (NKCD) each bind GTP. The tract at residues 181–200 (TGRMMTGGGGGGPPGTYAGK) is disordered. The span at 185–194 (MTGGGGGGPP) shows a compositional bias: gly residues. Residues Cys210 and Cys211 are each lipidated (S-palmitoyl cysteine). Residue Cys214 is modified to Cysteine methyl ester. A lipid anchor (S-geranylgeranyl cysteine) is attached at Cys214. Residues 215–217 (VVL) constitute a propeptide, removed in mature form.

The protein belongs to the small GTPase superfamily. Ras family.

Its subcellular location is the cell membrane. The catalysed reaction is GTP + H2O = GDP + phosphate + H(+). With respect to regulation, alternates between an inactive form bound to GDP and an active form bound to GTP. Activated by a guanine nucleotide-exchange factor (GEF) and inactivated by a GTPase-activating protein (GAP). This chain is Ras-like protein, found in Lentinula edodes (Shiitake mushroom).